A 436-amino-acid polypeptide reads, in one-letter code: Trigger factor (436 aa).

One can recognise a PPIase FKBP-type domain in the interval 161–246; the sequence is EDQLNIDFVG…VNTVSEPKLP (86 aa).

This sequence belongs to the FKBP-type PPIase family. Tig subfamily.

The protein resides in the cytoplasm. The catalysed reaction is [protein]-peptidylproline (omega=180) = [protein]-peptidylproline (omega=0). In terms of biological role, involved in protein export. Acts as a chaperone by maintaining the newly synthesized protein in an open conformation. Functions as a peptidyl-prolyl cis-trans isomerase. This is Trigger factor from Pseudomonas syringae pv. syringae (strain B728a).